We begin with the raw amino-acid sequence, 381 residues long: tRNA N6-adenosine threonylcarbamoyltransferase (381 aa).

2 residues coordinate Fe cation: His114 and His118. Substrate contacts are provided by residues 142-146 (VVSGG), Asp178, Gly191, Asp195, and Asn321. Residue Asp349 coordinates Fe cation.

Belongs to the KAE1 / TsaD family. The cofactor is Fe(2+).

The protein resides in the cytoplasm. The enzyme catalyses L-threonylcarbamoyladenylate + adenosine(37) in tRNA = N(6)-L-threonylcarbamoyladenosine(37) in tRNA + AMP + H(+). Required for the formation of a threonylcarbamoyl group on adenosine at position 37 (t(6)A37) in tRNAs that read codons beginning with adenine. Is involved in the transfer of the threonylcarbamoyl moiety of threonylcarbamoyl-AMP (TC-AMP) to the N6 group of A37, together with TsaE and TsaB. TsaD likely plays a direct catalytic role in this reaction. This Koribacter versatilis (strain Ellin345) protein is tRNA N6-adenosine threonylcarbamoyltransferase.